The sequence spans 478 residues: Bifunctional protein HldE (478 aa).

The ribokinase stretch occupies residues 1–318 (MKVTLPDFRQ…ENAIRGRADT (318 aa)). Residue 195–198 (NLSE) participates in ATP binding. Asp-264 is a catalytic residue. Residues 344–478 (MTNGCFDILH…NTIKANASKS (135 aa)) form a cytidylyltransferase region.

It in the N-terminal section; belongs to the carbohydrate kinase PfkB family. In the C-terminal section; belongs to the cytidylyltransferase family. As to quaternary structure, homodimer.

The enzyme catalyses D-glycero-beta-D-manno-heptose 7-phosphate + ATP = D-glycero-beta-D-manno-heptose 1,7-bisphosphate + ADP + H(+). It carries out the reaction D-glycero-beta-D-manno-heptose 1-phosphate + ATP + H(+) = ADP-D-glycero-beta-D-manno-heptose + diphosphate. Its pathway is nucleotide-sugar biosynthesis; ADP-L-glycero-beta-D-manno-heptose biosynthesis; ADP-L-glycero-beta-D-manno-heptose from D-glycero-beta-D-manno-heptose 7-phosphate: step 1/4. It participates in nucleotide-sugar biosynthesis; ADP-L-glycero-beta-D-manno-heptose biosynthesis; ADP-L-glycero-beta-D-manno-heptose from D-glycero-beta-D-manno-heptose 7-phosphate: step 3/4. Its function is as follows. Catalyzes the phosphorylation of D-glycero-D-manno-heptose 7-phosphate at the C-1 position to selectively form D-glycero-beta-D-manno-heptose-1,7-bisphosphate. Functionally, catalyzes the ADP transfer from ATP to D-glycero-beta-D-manno-heptose 1-phosphate, yielding ADP-D-glycero-beta-D-manno-heptose. The polypeptide is Bifunctional protein HldE (Pectobacterium carotovorum subsp. carotovorum (strain PC1)).